A 356-amino-acid chain; its full sequence is 4-hydroxy-2-oxovalerate aldolase (356 aa).

A Pyruvate carboxyltransferase domain is found at proline 7 to methionine 257. Residue arginine 15 to aspartate 16 coordinates substrate. Aspartate 16 is a Mn(2+) binding site. Histidine 19 acts as the Proton acceptor in catalysis. Residues serine 169 and histidine 196 each contribute to the substrate site. Residues histidine 196 and histidine 198 each coordinate Mn(2+). Tyrosine 287 provides a ligand contact to substrate.

Belongs to the 4-hydroxy-2-oxovalerate aldolase family.

The enzyme catalyses (S)-4-hydroxy-2-oxopentanoate = acetaldehyde + pyruvate. The sequence is that of 4-hydroxy-2-oxovalerate aldolase from Thermomicrobium roseum (strain ATCC 27502 / DSM 5159 / P-2).